The primary structure comprises 243 residues: Chromosome partition protein MukE (243 aa).

The tract at residues 214–243 is disordered; it reads DSLALEKQADLNEVDDNDELEDELDDEEHA. The segment covering 225–243 has biased composition (acidic residues); the sequence is NEVDDNDELEDELDDEEHA.

This sequence belongs to the MukE family. As to quaternary structure, interacts, and probably forms a ternary complex, with MukF and MukB. The complex formation is stimulated by calcium or magnesium.

It is found in the cytoplasm. It localises to the nucleoid. Its function is as follows. Involved in chromosome condensation, segregation and cell cycle progression. May participate in facilitating chromosome segregation by condensation DNA from both sides of a centrally located replisome during cell division. Probably acts via its interaction with MukB and MukF. The chain is Chromosome partition protein MukE from Pasteurella multocida (strain Pm70).